The sequence spans 175 residues: Large ribosomal subunit protein uL15 (175 aa).

Disordered regions lie at residues 1 to 65 and 155 to 175; these read MSTL…LPKF and PESAAKAHAGKGVKAPRQPKA. Positions 12 to 21 are enriched in basic residues; sequence RSWHRKKRVG. The span at 22–38 shows a compositional bias: gly residues; the sequence is RGQGSGLGKTAGRGGKG. The segment covering 160–169 has biased composition (low complexity); it reads KAHAGKGVKA.

Belongs to the universal ribosomal protein uL15 family. In terms of assembly, part of the 50S ribosomal subunit.

In terms of biological role, binds to the 23S rRNA. The sequence is that of Large ribosomal subunit protein uL15 from Myxococcus xanthus (strain DK1622).